Consider the following 1024-residue polypeptide: Multidrug resistance protein MdtC (1024 aa).

Transmembrane regions (helical) follow at residues 15-35, 333-353, 360-380, 387-407, 431-451, 463-483, 528-548, 853-873, 897-917, 953-973, and 984-1004; these read WLLT…LPVA, EVEQ…FAFL, LIPA…MYLC, LSLM…IVVL, VGFT…PLLL, FAIT…TLTP, WGLL…ISIP, LWLI…LYES, LFNA…IGIV, PIIM…LGSG, and ITIV…TPVV.

Belongs to the resistance-nodulation-cell division (RND) (TC 2.A.6) family. MdtC subfamily. In terms of assembly, part of a tripartite efflux system composed of MdtA, MdtB and MdtC. MdtC forms a heteromultimer with MdtB.

The protein localises to the cell inner membrane. The polypeptide is Multidrug resistance protein MdtC (Erwinia tasmaniensis (strain DSM 17950 / CFBP 7177 / CIP 109463 / NCPPB 4357 / Et1/99)).